A 281-amino-acid polypeptide reads, in one-letter code: Undecaprenyl-diphosphatase (281 aa).

8 consecutive transmembrane segments (helical) span residues 4–24, 45–65, 89–109, 113–133, 152–172, 190–210, 225–245, and 257–277; these read IEILKSIFFGIVEGITEWLPI, AFMSMFNVVIQLGAILAVMVI, WLKVLIATLPLLGVFKFDDWF, FHNMVSVALMLIIYGVAFIYL, LPYTTAFYIGLFQVLALLPGT, SVVTEFTFYLGIPVMFGASAL, GQLFLLLVAMGVAFAVSMVAI, and FTLFGKYRIVLGSVLLLYSFV.

The protein belongs to the UppP family.

It is found in the cell membrane. The catalysed reaction is di-trans,octa-cis-undecaprenyl diphosphate + H2O = di-trans,octa-cis-undecaprenyl phosphate + phosphate + H(+). In terms of biological role, catalyzes the dephosphorylation of undecaprenyl diphosphate (UPP). Confers resistance to bacitracin. The sequence is that of Undecaprenyl-diphosphatase from Streptococcus pneumoniae (strain Hungary19A-6).